A 151-amino-acid chain; its full sequence is Ribosome maturation factor RimP (151 aa).

Belongs to the RimP family.

It is found in the cytoplasm. Its function is as follows. Required for maturation of 30S ribosomal subunits. This chain is Ribosome maturation factor RimP, found in Photobacterium profundum (strain SS9).